Reading from the N-terminus, the 440-residue chain is MTKKIHINAFEMNCVGHIAHGLWRHPENQRHRYTDLNYWTELAQLLEKGKFDALFLADVVGIYDVYRQSRDTAVREAVQIPVNDPLMLISAMAYVTKHLAFAVTFSTTYEHPYGHARRMSTLDHLTKGRIAWNVVTSHLPSADKNFGIKKILEHDERYDLADEYLEVCYKLWEGSWEDNAVIRDIENNIYTDPSKVHEINHSGKYFEVPGPHLCEPSPQRTPVIYQAGMSERGREFAAKHAECVFLGGKDVETLKFFVDDIRKRAKKYGRNPDHIKMFAGICVIVGKTHDEAMEKLNSFQKYWSLEGHLAHYGGGTGYDLSKYSSNDYIGSISVGEIINNMSKLDGKWFKLSVGTPKKVADEMQYLVEEAGIDGFNLVQYVSPGTFVDFIELVVPELQKRGLYRVDYEEGTYREKLFGKGNYRLPDDHIAARYRNISSNV.

FMN contacts are provided by residues D58, 137–138, Y158, and 227–230; these read SH and AGMS.

It belongs to the NtaA/SnaA/DszA monooxygenase family. As to quaternary structure, homodimer.

It is found in the secreted. The enzyme catalyses a long-chain alkane + FMNH2 + O2 = a long chain fatty alcohol + FMN + H2O + H(+). Its function is as follows. Involved in the degradation of long-chain alkanes. Converts alkanes ranging from C(15) to C(36) into their corresponding primary alcohols. The polypeptide is Long-chain alkane monooxygenase (Geobacillus thermodenitrificans (strain NG80-2)).